We begin with the raw amino-acid sequence, 711 residues long: Quinolinate synthase, chloroplastic (711 aa).

Residues Met-1 to Arg-41 constitute a chloroplast transit peptide. The segment at Pro-17–Ser-63 is disordered. Residue Cys-114 is the Cysteine persulfide intermediate of the active site. Iminosuccinate contacts are provided by His-263 and Ser-289. Cys-343 is a binding site for [4Fe-4S] cluster. Residues Tyr-372 to Asn-374 and Ser-394 each bind iminosuccinate. Residue Cys-467 coordinates [4Fe-4S] cluster. Residues His-493–Glu-495 and Thr-518 contribute to the iminosuccinate site. Cys-631 is a [4Fe-4S] cluster binding site.

The protein belongs to the quinolinate synthase family. Type 1 subfamily. In terms of assembly, homodimer. The cofactor is [4Fe-4S] cluster.

The protein localises to the plastid. It localises to the chloroplast. The enzyme catalyses iminosuccinate + dihydroxyacetone phosphate = quinolinate + phosphate + 2 H2O + H(+). It functions in the pathway cofactor biosynthesis; NAD(+) biosynthesis; quinolinate from iminoaspartate: step 1/1. Its function is as follows. Catalyzes the condensation of iminoaspartate with dihydroxyacetone phosphate to form quinolinate. The polypeptide is Quinolinate synthase, chloroplastic (Oryza sativa subsp. japonica (Rice)).